The sequence spans 195 residues: Probable cobalt-precorrin-6B C(15)-methyltransferase (decarboxylating) (195 aa).

S-adenosyl-L-methionine contacts are provided by residues Thr-24, 48-52, Asp-72, and Ala-101; that span reads GCGTG.

This sequence belongs to the methyltransferase superfamily. Archaeal-type CbiT family.

It catalyses the reaction Co-precorrin-6B + S-adenosyl-L-methionine = Co-precorrin-7 + S-adenosyl-L-homocysteine + CO2. Its pathway is cofactor biosynthesis; adenosylcobalamin biosynthesis; cob(II)yrinate a,c-diamide from sirohydrochlorin (anaerobic route): step 8/10. Its function is as follows. Catalyzes the methylation of C-15 in cobalt-precorrin-6B followed by the decarboxylation of C-12 to form cobalt-precorrin-7. In Pyrobaculum calidifontis (strain DSM 21063 / JCM 11548 / VA1), this protein is Probable cobalt-precorrin-6B C(15)-methyltransferase (decarboxylating).